A 136-amino-acid chain; its full sequence is Large ribosomal subunit protein uL16 (136 aa).

It belongs to the universal ribosomal protein uL16 family. As to quaternary structure, part of the 50S ribosomal subunit.

Its function is as follows. Binds 23S rRNA and is also seen to make contacts with the A and possibly P site tRNAs. In Shewanella woodyi (strain ATCC 51908 / MS32), this protein is Large ribosomal subunit protein uL16.